Consider the following 317-residue polypeptide: 8-oxo-(d)GTP phosphatase (317 aa).

The Nudix hydrolase domain occupies 15-148; it reads RIVYAAGAVL…DRKVLCRFAK (134 aa). Substrate is bound by residues 43-46, Asp-48, and 53-55; these read RPRY and KGK. Positions 53, 69, and 73 each coordinate Mg(2+). Positions 54–75 match the Nudix box motif; that stretch reads GKVDPGETAPVGAVREILEETG. The substrate site is built by Tyr-89, Lys-99, Glu-118, and Tyr-136. Glu-118 contacts Mg(2+).

The protein belongs to the Nudix hydrolase family. Mg(2+) is required as a cofactor.

It carries out the reaction 8-oxo-dGTP + H2O = 8-oxo-dGDP + phosphate + H(+). The enzyme catalyses 8-oxo-GTP + H2O = 8-oxo-GDP + phosphate + H(+). Its function is as follows. Catalyzes the conversion of 8-oxo-dGTP to 8-oxo-dGDP, and 8-oxo-GTP to 8-oxo-GDP. The sequence is that of 8-oxo-(d)GTP phosphatase from Mycobacterium tuberculosis (strain CDC 1551 / Oshkosh).